We begin with the raw amino-acid sequence, 320 residues long: MGEQQQQVERQPDLPPGFRFHPTDEEIITFYLAPKVVDSRGFCVAAIGEVDLNKCEPWDLPGKAKMNGEKEWYFYCQKDRKYPTGMRTNRATEAGYWKATGKDKEIFRNHHMLIGMKKTLVFYKGRAPKGDKTNWVMHEYRLADASPPPPPSSAEPPRQDDWAVCRIFHKSSGIKKPVPVAPHQVPAAANYQQQQQMAMASAGIIQVPMQMQMPSMSDQLQMLDDFSTTASLSLMAPPSYSTLPAGFPLQINSGAHPQQFVGNPSMYYHQQQQMDMAGGGFVVSEPSSLVVSPQDAADQNNNAADISSMACTMDAAIWKY.

Residues 14 to 170 form the NAC domain; the sequence is LPPGFRFHPT…DWAVCRIFHK (157 aa). A DNA-binding region spans residues 114–176; it reads IGMKKTLVFY…IFHKSSGIKK (63 aa).

Forms homodimers. Forms heterodimers with NAC26. In terms of tissue distribution, expressed in developing seeds.

The protein resides in the nucleus. It localises to the endoplasmic reticulum. In terms of biological role, transcription factor that acts redundantly with NAC26 to regulate the expression of genes involved in the biosynthesis of starch and storage proteins in grain. Directly binds to the promoters of starch synthase 1 (SS1), pullulanase (PUL), glutelin A1 (GLUA1), glutelins B4 and B5 (GLUB4 and GLUB5), alpha-globulin and 16 kDa prolamin, and activates their expression. Possesses transactivation activity in yeast. In Oryza sativa subsp. indica (Rice), this protein is NAC domain-containing protein 20.